The primary structure comprises 184 residues: Ribosome-recycling factor (184 aa).

It belongs to the RRF family.

It is found in the cytoplasm. Responsible for the release of ribosomes from messenger RNA at the termination of protein biosynthesis. May increase the efficiency of translation by recycling ribosomes from one round of translation to another. This Borrelia recurrentis (strain A1) protein is Ribosome-recycling factor.